We begin with the raw amino-acid sequence, 111 residues long: MSDTLNRLAEVLEERKQAAPDSSYVASLYHKGLNKILEKLGEESIETIIAAKDAATSKDYSDVIYETADLWFHSLVMLSALGQHPQAVLDELERRFGLSGHDEKAARQPSA.

Belongs to the PRA-PH family.

The protein resides in the cytoplasm. It carries out the reaction 1-(5-phospho-beta-D-ribosyl)-ATP + H2O = 1-(5-phospho-beta-D-ribosyl)-5'-AMP + diphosphate + H(+). It participates in amino-acid biosynthesis; L-histidine biosynthesis; L-histidine from 5-phospho-alpha-D-ribose 1-diphosphate: step 2/9. This chain is Phosphoribosyl-ATP pyrophosphatase, found in Pseudomonas entomophila (strain L48).